Consider the following 147-residue polypeptide: D-aminoacyl-tRNA deacylase (147 aa).

A Gly-cisPro motif, important for rejection of L-amino acids motif is present at residues 136–137 (GP).

It belongs to the DTD family. As to quaternary structure, homodimer.

The protein localises to the cytoplasm. The catalysed reaction is glycyl-tRNA(Ala) + H2O = tRNA(Ala) + glycine + H(+). It catalyses the reaction a D-aminoacyl-tRNA + H2O = a tRNA + a D-alpha-amino acid + H(+). Functionally, an aminoacyl-tRNA editing enzyme that deacylates mischarged D-aminoacyl-tRNAs. Also deacylates mischarged glycyl-tRNA(Ala), protecting cells against glycine mischarging by AlaRS. Acts via tRNA-based rather than protein-based catalysis; rejects L-amino acids rather than detecting D-amino acids in the active site. By recycling D-aminoacyl-tRNA to D-amino acids and free tRNA molecules, this enzyme counteracts the toxicity associated with the formation of D-aminoacyl-tRNA entities in vivo and helps enforce protein L-homochirality. In Streptococcus uberis (strain ATCC BAA-854 / 0140J), this protein is D-aminoacyl-tRNA deacylase.